The primary structure comprises 485 residues: Lysophospholipid acyltransferase 5 (485 aa).

Ala-2 carries the N-acetylalanine modification. 7 helical membrane passes run 35–55, 82–102, 108–128, 139–158, 176–196, 232–252, and 283–303; these read ASEQ…FALF, YNFG…FLIL, TITA…AGYY, WTMP…MDYY, IWGV…GAFL, LALG…ITED, and VTCW…FNGL. Residues Asn-336 and His-372 contribute to the active site. The next 3 membrane-spanning stretches (helical) occupy residues 362–382, 420–440, and 448–468; these read GLSL…LVCF, LAQQ…FCLF, and VYKS…FILP. The short motif at 482 to 485 is the Di-lysine motif element; it reads KKME.

This sequence belongs to the membrane-bound acyltransferase family.

The protein resides in the endoplasmic reticulum membrane. The enzyme catalyses a 1-acyl-sn-glycero-3-phosphocholine + an acyl-CoA = a 1,2-diacyl-sn-glycero-3-phosphocholine + CoA. It carries out the reaction a 1-acyl-sn-glycero-3-phosphoethanolamine + an acyl-CoA = a 1,2-diacyl-sn-glycero-3-phosphoethanolamine + CoA. It catalyses the reaction a 1-acyl-sn-glycero-3-phospho-L-serine + an acyl-CoA = a 1,2-diacyl-sn-glycero-3-phospho-L-serine + CoA. The catalysed reaction is (9Z,12Z)-octadecadienoyl-CoA + a 1-acyl-sn-glycero-3-phosphocholine = 1-acyl-2-(9Z,12Z)-octadecadienoyl-sn-glycero-3-phosphocholine + CoA. The enzyme catalyses (5Z,8Z,11Z,14Z)-eicosatetraenoyl-CoA + a 1-acyl-sn-glycero-3-phosphocholine = 1-acyl-2-(5Z,8Z,11Z,14Z-eicosatetraenoyl)-sn-glycero-3-phosphocholine + CoA. It carries out the reaction dodecanoyl-CoA + 1-hexadecanoyl-sn-glycero-3-phosphocholine = 1-hexadecanoyl-2-dodecanoyl-sn-glycero-3-phosphocholine + CoA. It catalyses the reaction octadecanoyl-CoA + 1-hexadecanoyl-sn-glycero-3-phosphocholine = 1-hexadecanoyl-2-octadecanoyl-sn-glycero-3-phosphocholine + CoA. The catalysed reaction is 1-dodecanoyl-sn-glycero-3-phosphocholine + hexadecanoyl-CoA = 1-dodecanoyl-2-hexadecanoyl-sn-glycero-3-phosphocholine + CoA. The enzyme catalyses 1-tetradecanoyl-sn-glycero-3-phosphocholine + hexadecanoyl-CoA = 1-tetradecanoyl-2-hexadecanoyl-sn-glycero-3-phosphocholine + CoA. It carries out the reaction 1-hexadecanoyl-sn-glycero-3-phosphocholine + hexadecanoyl-CoA = 1,2-dihexadecanoyl-sn-glycero-3-phosphocholine + CoA. It catalyses the reaction 1-octadecanoyl-sn-glycero-3-phosphocholine + hexadecanoyl-CoA = 1-octadecanoyl-2-hexadecanoyl-sn-glycero-3-phosphocholine + CoA. The catalysed reaction is 1-(9Z-octadecenoyl)-sn-glycero-3-phosphocholine + hexadecanoyl-CoA = 1-(9Z-octadecenoyl)-2-hexadecanoyl-sn-glycero-3-phosphocholine + CoA. The enzyme catalyses (9Z)-hexadecenoyl-CoA + 1-hexadecanoyl-sn-glycero-3-phosphocholine = 1-hexadecanoyl-2-(9Z-hexadecenoyl)-sn-glycero-3-phosphocholine + CoA. It carries out the reaction 1-hexadecanoyl-sn-glycero-3-phosphocholine + (9Z)-octadecenoyl-CoA = 1-hexadecanoyl-2-(9Z-octadecenoyl)-sn-glycero-3-phosphocholine + CoA. It catalyses the reaction (9Z,12Z)-octadecadienoyl-CoA + 1-hexadecanoyl-sn-glycero-3-phosphocholine = 1-hexadecanoyl-2-(9Z,12Z-octadecadienoyl)-sn-glycero-3-phosphocholine + CoA. The catalysed reaction is 1-dodecanoyl-sn-glycero-3-phosphocholine + (5Z,8Z,11Z,14Z)-eicosatetraenoyl-CoA = 1-dodecanoyl-2-(5Z,8Z,11Z,14Z)-eicosatetraenoyl-sn-glycero-3-phosphocholine + CoA. The enzyme catalyses (5Z,8Z,11Z,14Z)-eicosatetraenoyl-CoA + 1-hexadecanoyl-sn-glycero-3-phosphocholine = 1-hexadecanoyl-2-(5Z,8Z,11Z,14Z-eicosatetraenoyl)-sn-glycero-3-phosphocholine + CoA. It carries out the reaction 1-octadecanoyl-sn-glycero-3-phosphocholine + (5Z,8Z,11Z,14Z)-eicosatetraenoyl-CoA = 1-octadecanoyl-2-(5Z,8Z,11Z,14Z-eicosatetraenoyl)-sn-glycero-3-phosphocholine + CoA. It catalyses the reaction 1-eicosanoyl-sn-glycero-3-phosphocholine + (5Z,8Z,11Z,14Z)-eicosatetraenoyl-CoA = 1-eicosanoyl-2-(5Z,8Z,11Z,14Z)-eicosatetraenoyl-sn-glycero-3-phosphocholine + CoA. The catalysed reaction is 1-(9Z-octadecenoyl)-sn-glycero-3-phosphocholine + (9Z)-octadecenoyl-CoA = 1,2-di-(9Z-octadecenoyl)-sn-glycero-3-phosphocholine + CoA. The enzyme catalyses 1-(9Z-octadecenoyl)-sn-glycero-3-phosphocholine + (9Z,12Z)-octadecadienoyl-CoA = 1-(9Z)-octadecenoyl-2-(9Z,12Z)-octadecadienoyl-sn-glycero-3-phosphocholine + CoA. It carries out the reaction 1-(9Z-octadecenoyl)-sn-glycero-3-phosphocholine + (5Z,8Z,11Z,14Z)-eicosatetraenoyl-CoA = 1-(9Z)-octadecenoyl-2-(5Z,8Z,11Z,14Z)-icosatetraenoyl-sn-glycero-3-phosphocholine + CoA. It catalyses the reaction a 1-acyl-sn-glycero-3-phosphoethanolamine + (9Z,12Z)-octadecadienoyl-CoA = 1-acyl-2-(9Z,12Z)-octadecadienoyl-sn-glycero-3-phosphoethanolamine + CoA. The catalysed reaction is 1-(9Z-octadecenoyl)-sn-glycero-3-phosphoethanolamine + (9Z,12Z)-octadecadienoyl-CoA = 1-(9Z)-octadecenoyl-2-(9Z,12Z)-octadecadienoyl-sn-glycero-3-phosphoethanolamine + CoA. The enzyme catalyses 1-(10Z-heptadecenoyl)-sn-glycero-3-phosphoethanolamine + (9Z,12Z)-octadecadienoyl-CoA = 1-(10Z-heptadecenoyl)-2-(9Z,12Z-octadecadienoyl)-sn-glycero-3-phosphoethanolamine + CoA. It carries out the reaction a 1-acyl-sn-glycero-3-phosphoethanolamine + (5Z,8Z,11Z,14Z)-eicosatetraenoyl-CoA = 1-acyl-2-(5Z,8Z,11Z,14Z)-eicosatetraenoyl-sn-glycero-3-phosphoethanolamine + CoA. It catalyses the reaction 1-hexadecanoyl-sn-glycero-3-phosphoethanolamine + (5Z,8Z,11Z,14Z)-eicosatetraenoyl-CoA = 1-hexadecanoyl-2-(5Z,8Z,11Z,14Z-eicosatetraenoyl)-sn-glycero-3-phosphoethanolamine + CoA. The catalysed reaction is 1-(9Z-octadecenoyl)-sn-glycero-3-phosphoethanolamine + (5Z,8Z,11Z,14Z)-eicosatetraenoyl-CoA = 1-(9Z)-octadecenoyl-2-(5Z,8Z,11Z,14Z)-eicosatetraenoyl-sn-glycero-3-phosphoethanolamine + CoA. The enzyme catalyses 1-(10Z-heptadecenoyl)-sn-glycero-3-phosphoethanolamine + (5Z,8Z,11Z,14Z)-eicosatetraenoyl-CoA = 1-(10Z-heptadecenoyl)-2-(5Z,8Z,11Z,14Z-eicosatetraenoyl)-sn-glycero-3-phosphoethanolamine + CoA. It carries out the reaction a 1-O-(1Z-alkenyl)-sn-glycero-3-phosphoethanolamine + (5Z,8Z,11Z,14Z)-eicosatetraenoyl-CoA = 1-O-(1Z)-alkenyl-2-(5Z,8Z,11Z,14Z)-eicosatetraenoyl-sn-glycero-3-phosphoethanolamine + CoA. It catalyses the reaction a 1-acyl-sn-glycero-3-phospho-L-serine + (9Z,12Z)-octadecadienoyl-CoA = 1-acyl-2-(9Z,12Z-octadecadienoyl)-sn-glycero-3-phospho-L-serine + CoA. The catalysed reaction is a 1-acyl-sn-glycero-3-phospho-L-serine + (5Z,8Z,11Z,14Z)-eicosatetraenoyl-CoA = 1-acyl-2-(5Z,8Z,11Z,14Z-eicosatetraenoyl)-sn-glycero-3-phospho-L-serine + CoA. The enzyme catalyses 1-hexadecanoyl-sn-glycero-3-phospho-L-serine + (9Z)-octadecenoyl-CoA = 1-hexadecanoyl-2-(9Z-octadecenoyl)-sn-glycero-3-phospho-L-serine + CoA. It carries out the reaction 1-(9Z-octadecenoyl)-sn-glycero-3-phospho-L-serine + (9Z)-octadecenoyl-CoA = 1,2-di-(9Z)-octadecenoyl-sn-glycero-3-phospho-L-serine + CoA. It catalyses the reaction 1-hexadecanoyl-sn-glycero-3-phospho-L-serine + (9Z,12Z)-octadecadienoyl-CoA = 1-hexadecanoyl-2-(9Z,12Z-octadecadienoyl)-sn-glycero-3-phospho-L-serine + CoA. The catalysed reaction is 1-(9Z-octadecenoyl)-sn-glycero-3-phospho-L-serine + (9Z,12Z)-octadecadienoyl-CoA = 1-(9Z-octadecenoyl)-2-(9Z,12Z-octadienoyl)-sn-glycero-3-phospho-L-serine + CoA. The enzyme catalyses 1-hexadecanoyl-sn-glycero-3-phospho-L-serine + (5Z,8Z,11Z,14Z)-eicosatetraenoyl-CoA = 1-hexadecanoyl-2-(5Z,8Z,11Z,14Z-eicosatetraenoyl)-sn-glycero-3-phospho-L-serine + CoA. It carries out the reaction 1-(9Z-octadecenoyl)-sn-glycero-3-phospho-L-serine + (5Z,8Z,11Z,14Z)-eicosatetraenoyl-CoA = 1-(9Z-octadecenoyl)-2-(5Z,8Z,11Z,14Z-eicosatetraenoyl)-sn-glycero-3-phospho-L-serine + CoA. It participates in lipid metabolism; phospholipid metabolism. Lysophospholipid O-acyltransferase (LPLAT) that catalyzes the reacylation step of the phospholipid remodeling process also known as the Lands cycle. Catalyzes transfer of the fatty acyl chain from fatty acyl-CoA to 1-acyl lysophospholipid to form various classes of phospholipids. Converts 1-acyl lysophosphatidylcholine (LPC) into phosphatidylcholine (PC) (LPCAT activity), 1-acyl lysophosphatidylserine (LPS) into phosphatidylserine (PS) (LPSAT activity) and 1-acyl lysophosphatidylethanolamine (LPE) into phosphatidylethanolamine (PE) (LPEAT activity). Favors polyunsaturated fatty acyl-CoAs as acyl donors compared to saturated fatty acyl-CoAs. Has higher activity for LPC acyl acceptors compared to LPEs and LPSs. Can also transfer the fatty acyl chain from fatty acyl-CoA to 1-O-alkyl lysophospholipid or 1-O-alkenyl lysophospholipid with lower efficiency. Acts as a major LPC O-acyltransferase in liver and intestine. As a component of the liver X receptor/NR1H3 or NR1H2 signaling pathway, mainly catalyzes the incorporation of arachidonate into PCs of endoplasmic reticulum (ER) membranes, increasing membrane dynamics and enabling triacylglycerols transfer to nascent very low-density lipoprotein (VLDL) particles. Promotes processing of sterol regulatory protein SREBF1 in hepatocytes, likely by facilitating the translocation of SREBF1-SCAP complex from ER to the Golgi apparatus. Participates in mechanisms by which the liver X receptor/NR1H3 or NR1H2 signaling pathway counteracts lipid-induced ER stress response and inflammation. Down-regulates hepatic inflammation by limiting arachidonic acid availability for synthesis of inflammatory eicosanoids, such as prostaglandins. In enterocytes, acts as a component of a gut-brain feedback loop that coordinates dietary lipid absorption and food intake. Regulates the abundance of PCs containing linoleate and arachidonate in enterocyte membranes, enabling passive diffusion of fatty acids and cholesterol across the membrane for efficient chylomicron assembly. In the intestinal crypt, acts as a component of dietary-responsive phospholipid-cholesterol axis, regulating the biosynthesis of cholesterol and its mitogenic effects on intestinal stem cells. The polypeptide is Lysophospholipid acyltransferase 5 (LPCAT3) (Bos taurus (Bovine)).